Consider the following 117-residue polypeptide: Large ribosomal subunit protein bL20 (117 aa).

Belongs to the bacterial ribosomal protein bL20 family.

In terms of biological role, binds directly to 23S ribosomal RNA and is necessary for the in vitro assembly process of the 50S ribosomal subunit. It is not involved in the protein synthesizing functions of that subunit. This Glaesserella parasuis serovar 5 (strain SH0165) (Haemophilus parasuis) protein is Large ribosomal subunit protein bL20.